A 470-amino-acid polypeptide reads, in one-letter code: MNPNQKIICISATGMTLSVVSLLIGIANLGLNIGLHYKVGDTPDANTPNVNETNSTTTIINNNTQNNFTNITNIIVSKNEERTFLNLTKPLCEVNSWHILSKDNAIRIGEDAHILVTREPYLSCDPQGCRMFALSQGTTLRGRHANGTIHDRSPFRALISWEMGQAPSPYNVRVECIGWSSTSCHDGISRMSICMSGPNNNASAVVWYGGRPVTEIPSWAGNILRTQESECVCHRGICPVVMTDGPANNRAATKIIYFKEGKIQKIEELAGNAQHIEECSCYGAVGMIKCICRDNWKGANRPVITIDSEMMTHTSKYLCSKVLTDTSRPNDPTNGDCDAPITGGSPDPGVKGFAFLDGENSWLGRTISKDSRSGYEMLKVPNAETDTRSEPTSHQVIINNQNWSGYSGAFIDYWANKECFNPCFYVELIRGRPKESSVLWTSNSIVALCGSRERLGSWSWHDGAEIIYFK.

The Intravirion segment spans residues 1–6 (MNPNQK). A helical membrane pass occupies residues 7–27 (IICISATGMTLSVVSLLIGIA). The segment at 11-33 (SATGMTLSVVSLLIGIANLGLNI) is involved in apical transport and lipid raft association. Residues 28–470 (NLGLNIGLHY…HDGAEIIYFK (443 aa)) lie on the Virion surface side of the membrane. Residues 36–88 (HYKVGDTPDANTPNVNETNSTTTIINNNTQNNFTNITNIIVSKNEERTFLNLT) are hypervariable stalk region. N-linked (GlcNAc...) asparagine; by host glycans are attached at residues asparagine 51, asparagine 54, asparagine 62, asparagine 67, asparagine 70, and asparagine 86. A head of neuraminidase region spans residues 91–470 (LCEVNSWHIL…HDGAEIIYFK (380 aa)). Cystine bridges form between cysteine 92–cysteine 419, cysteine 124–cysteine 129, cysteine 184–cysteine 231, cysteine 233–cysteine 238, cysteine 279–cysteine 292, cysteine 281–cysteine 290, cysteine 319–cysteine 337, and cysteine 423–cysteine 449. Substrate is bound at residue arginine 118. Asparagine 146 carries N-linked (GlcNAc...) asparagine; by host glycosylation. The active-site Proton donor/acceptor is aspartate 151. Arginine 152 lines the substrate pocket. Asparagine 201 carries an N-linked (GlcNAc...) asparagine; by host glycan. 277–278 (EE) is a binding site for substrate. Arginine 293 lines the substrate pocket. Ca(2+) is bound by residues aspartate 294, glycine 298, and aspartate 325. Arginine 372 is a substrate binding site. The N-linked (GlcNAc...) asparagine; by host glycan is linked to asparagine 402. Tyrosine 406 (nucleophile) is an active-site residue.

Belongs to the glycosyl hydrolase 34 family. As to quaternary structure, homotetramer. The cofactor is Ca(2+). In terms of processing, N-glycosylated.

It is found in the virion membrane. It localises to the host apical cell membrane. It catalyses the reaction Hydrolysis of alpha-(2-&gt;3)-, alpha-(2-&gt;6)-, alpha-(2-&gt;8)- glycosidic linkages of terminal sialic acid residues in oligosaccharides, glycoproteins, glycolipids, colominic acid and synthetic substrates.. Its activity is regulated as follows. Inhibited by the neuraminidase inhibitors zanamivir (Relenza) and oseltamivir (Tamiflu). These drugs interfere with the release of progeny virus from infected cells and are effective against all influenza strains. Resistance to neuraminidase inhibitors is quite rare. In terms of biological role, catalyzes the removal of terminal sialic acid residues from viral and cellular glycoconjugates. Cleaves off the terminal sialic acids on the glycosylated HA during virus budding to facilitate virus release. Additionally helps virus spread through the circulation by further removing sialic acids from the cell surface. These cleavages prevent self-aggregation and ensure the efficient spread of the progeny virus from cell to cell. Otherwise, infection would be limited to one round of replication. Described as a receptor-destroying enzyme because it cleaves a terminal sialic acid from the cellular receptors. May facilitate viral invasion of the upper airways by cleaving the sialic acid moieties on the mucin of the airway epithelial cells. Likely to plays a role in the budding process through its association with lipid rafts during intracellular transport. May additionally display a raft-association independent effect on budding. Plays a role in the determination of host range restriction on replication and virulence. Sialidase activity in late endosome/lysosome traffic seems to enhance virus replication. This is Neuraminidase from Influenza A virus (strain A/Budgerigar/Hokkaido/1/1977 H4N6).